Consider the following 216-residue polypeptide: MOB kinase activator 3B (216 aa).

Residues cysteine 82, cysteine 87, histidine 164, and histidine 169 each contribute to the Zn(2+) site.

This sequence belongs to the MOB1/phocein family.

Its function is as follows. Modulates LATS1 expression in the Hippo signaling pathway which plays a pivotal role in organ size control and tumor suppression by restricting proliferation and promoting apoptosis. This is MOB kinase activator 3B from Homo sapiens (Human).